We begin with the raw amino-acid sequence, 699 residues long: Receptor-type tyrosine-protein phosphatase epsilon (699 aa).

An N-terminal signal peptide occupies residues 1 to 22 (MEPFCPLLLASFSLSLATAGQG). Residues 20 to 36 (GQGNDTTPTESNWTSTT) are compositionally biased toward low complexity. Residues 20–41 (GQGNDTTPTESNWTSTTAGPPD) form a disordered region. Asn23 and Asn31 each carry an N-linked (GlcNAc...) asparagine glycan. Residues 23 to 47 (NDTTPTESNWTSTTAGPPDPGTSQP) lie on the Extracellular side of the membrane. Residues 48-68 (LLTWLLLPLLLLLFLLAAYFF) traverse the membrane as a helical segment. At 69 to 699 (RFRKQRKAVV…DIFSDYANFK (631 aa)) the chain is on the cytoplasmic side. Tyrosine-protein phosphatase domains follow at residues 134–393 (FREE…LLEY) and 425–688 (LEEE…VQDF). Residues Asp302, 334–340 (CSAGVGR), and Gln378 contribute to the substrate site. The Phosphocysteine intermediate role is filled by Cys334. The active-site Phosphocysteine intermediate is Cys629. Tyr695 carries the post-translational modification Phosphotyrosine.

The protein belongs to the protein-tyrosine phosphatase family. Receptor class 4 subfamily. As to quaternary structure, monomer. Isoform 2: Homodimer. Can form oligomers. Dimerization is increased by oxidative stress and decreased by EGFR. Isoform 2 interacts with GRB2. A catalytically active cytoplasmic form (p65) is produced by proteolytic cleavage of either isoform 1, isoform 2 or isoform 3. In terms of processing, isoform 1 and isoform 2 are phosphorylated on tyrosine residues by tyrosine kinase Neu. Post-translationally, N-glycosylated. Isoform 1 is highly expressed in the brain, lung, spleen and testis. Isoform 2 is highly expressed in thymus, spleen and lung. Isoform 1 and isoform 2 are expressed in primary hepatocytes.

The protein resides in the cell membrane. It localises to the cytoplasm. The enzyme catalyses O-phospho-L-tyrosyl-[protein] + H2O = L-tyrosyl-[protein] + phosphate. Functionally, isoform 1 plays a critical role in signaling transduction pathways and phosphoprotein network topology in red blood cells. May play a role in osteoclast formation and function. Acts as a negative regulator of insulin receptor (IR) signaling and is involved in insulin-induced glucose metabolism mainly through direct dephosphorylation and inactivation of IR in hepatocytes and liver. Isoform 2 acts as a negative regulator of insulin receptor (IR) signaling in skeletal muscle. Regulates insulin-induced tyrosine phosphorylation of insulin receptor (IR) and insulin receptor substrate 1 (IRS-1), phosphorylation of protein kinase B and glycogen synthase kinase-3 and insulin induced stimulation of glucose uptake. In terms of biological role, isoform 1 and isoform 2 act as a negative regulator of FceRI-mediated signal transduction leading to cytokine production and degranulation, most likely by acting at the level of SYK to affect downstream events such as phosphorylation of SLP76 and LAT and mobilization of Ca(2+). This is Receptor-type tyrosine-protein phosphatase epsilon (Ptpre) from Rattus norvegicus (Rat).